A 637-amino-acid polypeptide reads, in one-letter code: Biosynthetic arginine decarboxylase (637 aa).

Lys-101 bears the N6-(pyridoxal phosphate)lysine mark. 286–296 (FDVGGGLAVDY) serves as a coordination point for substrate.

This sequence belongs to the Orn/Lys/Arg decarboxylase class-II family. SpeA subfamily. Mg(2+) serves as cofactor. The cofactor is pyridoxal 5'-phosphate.

The enzyme catalyses L-arginine + H(+) = agmatine + CO2. Its pathway is amine and polyamine biosynthesis; agmatine biosynthesis; agmatine from L-arginine: step 1/1. In terms of biological role, catalyzes the biosynthesis of agmatine from arginine. The polypeptide is Biosynthetic arginine decarboxylase (Shewanella woodyi (strain ATCC 51908 / MS32)).